Reading from the N-terminus, the 492-residue chain is Cytochrome P450 26A1 (492 aa).

Residue Cys438 participates in heme binding.

This sequence belongs to the cytochrome P450 family. Requires heme as cofactor.

It is found in the endoplasmic reticulum membrane. The protein localises to the microsome membrane. The catalysed reaction is all-trans-retinoate + reduced [NADPH--hemoprotein reductase] + O2 = all-trans-(4S)-hydroxyretinoate + oxidized [NADPH--hemoprotein reductase] + H2O + H(+). A cytochrome P450 monooxygenase involved in the metabolism of all-trans retinoic acid (atRA), a signaling molecule that binds to retinoic acid receptors and regulates gene transcription. Mechanistically, uses molecular oxygen inserting one oxygen atom into a substrate, and reducing the second into a water molecule, with two electrons provided by NADPH via cytochrome P450 reductase (CPR; NADPH-ferrihemoprotein reductase). Catalyzes the hydroxylation of carbon hydrogen bonds of atRA primarily at C-4. Has no activity toward 9-cis and 13-cis retinoic acid stereoisomers. May play a role in the oxidative metabolism of xenobiotics such as tazarotenic acid. The polypeptide is Cytochrome P450 26A1 (cyp26a1) (Danio rerio (Zebrafish)).